We begin with the raw amino-acid sequence, 140 residues long: Nucleoside diphosphate kinase (140 aa).

6 residues coordinate ATP: K11, F59, R87, T93, R104, and N114. Catalysis depends on H117, which acts as the Pros-phosphohistidine intermediate.

It belongs to the NDK family. In terms of assembly, homotetramer. Mg(2+) serves as cofactor.

It is found in the cytoplasm. The enzyme catalyses a 2'-deoxyribonucleoside 5'-diphosphate + ATP = a 2'-deoxyribonucleoside 5'-triphosphate + ADP. It catalyses the reaction a ribonucleoside 5'-diphosphate + ATP = a ribonucleoside 5'-triphosphate + ADP. Its function is as follows. Major role in the synthesis of nucleoside triphosphates other than ATP. The ATP gamma phosphate is transferred to the NDP beta phosphate via a ping-pong mechanism, using a phosphorylated active-site intermediate. This chain is Nucleoside diphosphate kinase, found in Rickettsia akari (strain Hartford).